The primary structure comprises 336 residues: Anthranilate phosphoribosyltransferase (336 aa).

Residues G82, G85–D86, T90, N92–T95, K110–S118, and S122 contribute to the 5-phospho-alpha-D-ribose 1-diphosphate site. Residue G82 participates in anthranilate binding. S94 contacts Mg(2+). N113 provides a ligand contact to anthranilate. R168 lines the anthranilate pocket. Positions 227 and 228 each coordinate Mg(2+).

It belongs to the anthranilate phosphoribosyltransferase family. As to quaternary structure, homodimer. Mg(2+) serves as cofactor.

It catalyses the reaction N-(5-phospho-beta-D-ribosyl)anthranilate + diphosphate = 5-phospho-alpha-D-ribose 1-diphosphate + anthranilate. The protein operates within amino-acid biosynthesis; L-tryptophan biosynthesis; L-tryptophan from chorismate: step 2/5. In terms of biological role, catalyzes the transfer of the phosphoribosyl group of 5-phosphorylribose-1-pyrophosphate (PRPP) to anthranilate to yield N-(5'-phosphoribosyl)-anthranilate (PRA). The chain is Anthranilate phosphoribosyltransferase from Leptospira borgpetersenii serovar Hardjo-bovis (strain JB197).